We begin with the raw amino-acid sequence, 193 residues long: Pyridoxal 5'-phosphate synthase subunit PdxT (193 aa).

Residue 50 to 52 (GES) coordinates L-glutamine. Cys82 functions as the Nucleophile in the catalytic mechanism. Residues Arg109 and 136–137 (IR) contribute to the L-glutamine site. Active-site charge relay system residues include His172 and Glu174.

The protein belongs to the glutaminase PdxT/SNO family. In terms of assembly, in the presence of PdxS, forms a dodecamer of heterodimers. Only shows activity in the heterodimer.

It carries out the reaction aldehydo-D-ribose 5-phosphate + D-glyceraldehyde 3-phosphate + L-glutamine = pyridoxal 5'-phosphate + L-glutamate + phosphate + 3 H2O + H(+). The catalysed reaction is L-glutamine + H2O = L-glutamate + NH4(+). The protein operates within cofactor biosynthesis; pyridoxal 5'-phosphate biosynthesis. Catalyzes the hydrolysis of glutamine to glutamate and ammonia as part of the biosynthesis of pyridoxal 5'-phosphate. The resulting ammonia molecule is channeled to the active site of PdxS. This chain is Pyridoxal 5'-phosphate synthase subunit PdxT, found in Streptococcus pneumoniae serotype 19F (strain G54).